Consider the following 131-residue polypeptide: MKTLKVNIVTPDGPVYDADIEMVSVRAESGELGILPGHIPTVAPLKIAAVRLKKDGQTELVAVSGGIVEVRPDHVTILAQTAETSEQIDKERALAAKRRAEERLQKQTPDVDIIRAELALKRAINRLDVAR.

It belongs to the ATPase epsilon chain family. In terms of assembly, F-type ATPases have 2 components, CF(1) - the catalytic core - and CF(0) - the membrane proton channel. CF(1) has five subunits: alpha(3), beta(3), gamma(1), delta(1), epsilon(1). CF(0) has three main subunits: a, b and c.

Its subcellular location is the cell membrane. Its function is as follows. Produces ATP from ADP in the presence of a proton gradient across the membrane. This chain is ATP synthase epsilon chain, found in Bacillus licheniformis (strain ATCC 14580 / DSM 13 / JCM 2505 / CCUG 7422 / NBRC 12200 / NCIMB 9375 / NCTC 10341 / NRRL NRS-1264 / Gibson 46).